The sequence spans 149 residues: Hordoindoline-A (149 aa).

Residues 1–19 (MKALFLMGLLALVASAAFA) form the signal peptide. Residues 20-28 (QYGEVVGSY) constitute a propeptide that is removed on maturation. A propeptide spans 148 to 149 (YW) (removed in mature form).

Five disulfide bonds are present. In terms of tissue distribution, found in endosperm and aleurone layer of developing kernels, but not in the embryo.

Its subcellular location is the membrane. The protein resides in the secreted. It is found in the extracellular space. Its function is as follows. Acts as a membranotoxin, probably through its antibacterial and antifungal activities, contributing to the defense mechanism of the plant against predators. Forms monovalent cation-selective ion channels in membranes. Contributes to grain texture and hardness. This is Hordoindoline-A (HINA) from Hordeum vulgare (Barley).